A 1693-amino-acid polypeptide reads, in one-letter code: Non-structural polyprotein pORF1 (1693 aa).

In terms of domain architecture, Alphavirus-like MT spans 56–240 (VFRPEVFWNH…HDVSNLRSWI (185 aa)). Residues 60–240 (EVFWNHPIQR…HDVSNLRSWI (181 aa)) form a methyltransferase region. Residues 241-439 (RTTKVTGDHP…FYAQCRRWLS (199 aa)) form a Y-domain region. Cysteine 434 and cysteine 481 are joined by a disulfide. The tract at residues 442-509 (FHLDPRVLVF…EAYEGSDVDP (68 aa)) is putative protease. Positions 510–691 (AESAISDISG…FSPGHVWESA (182 aa)) are zinc-binding. Zn(2+) is bound by residues histidine 671, glutamate 673, and histidine 686. The segment at 712 to 778 (SSPARPDLGL…AITHQTARHR (67 aa)) is hinge. Residues 737 to 769 (AVLLPPPAPDPPPPPSAPALDEPASGATAGAPA) are disordered. Over residues 740–753 (LPPPAPDPPPPPSA) the composition is skewed to pro residues. The Macro domain maps to 775-921 (ARHRRLLFTY…LYLPELAARW (147 aa)). An X-domain region spans residues 785–942 (PDGSKVFAGS…TITEDVARTA (158 aa)). The 149-residue stretch at 934–1082 (ITEDVARTAN…RPDLGPTSWW (149 aa)) folds into the (+)RNA virus helicase ATP-binding domain. Residues 960-1204 (GCRVTPGVVQ…ISDAIVNNFF (245 aa)) are NTPase/helicase. 975 to 982 (GVPGSGKS) lines the ATP pocket. A (+)RNA virus helicase C-terminal domain is found at 1083-1216 (HVTHRCPADV…GGEIGHQRPS (134 aa)). The tract at residues 1207-1693 (GGEIGHQRPS…LTNSILCRVE (487 aa)) is RNA-directed RNA polymerase. Residues 1454-1565 (SMVFENDFSE…LCSEYRQSPG (112 aa)) enclose the RdRp catalytic domain.

Belongs to the hepevirus non-structural polyprotein family. The protease domain interacts with host EIF2AK4 (via C-terminus); this interaction inhibits dimerization of EIF2AK4 and prevents EIF2AK4-mediated phosphorylation of host EIF2A. It depends on Mg(2+) as a cofactor. ORF1 polyprotein does not seem to be processed into distinct enzymatic domains by a viral protease belonging to ORF1, but could be processed by a host serine protease like thrombin.

It is found in the host cytoplasm. The protein localises to the host perinuclear region. The enzyme catalyses RNA(n) + a ribonucleoside 5'-triphosphate = RNA(n+1) + diphosphate. It catalyses the reaction GTP + S-adenosyl-L-methionine = N(7)-methyl-GTP + S-adenosyl-L-homocysteine. With respect to regulation, putative protease: Inhibited by chymostatin. Its function is as follows. Methyltransferase: Displays a capping enzyme activity. This function is necessary since all viral RNAs are synthesized in the cytoplasm, and host capping enzymes are restricted to the nucleus. The enzymatic reaction involves a covalent link between 7-methyl-GMP and the methyltransferase, whereas eukaryotic capping enzymes form a covalent complex only with GMP. Methyltransferase catalyzes transfer of a methyl group from S-adenosylmethionine to GTP and GDP to yield m(7)GTP or m(7)GDP. GDP is a better substrate than GTP. This enzyme also displays guanylyltransferase activity to form a covalent complex, methyltransferase-m(7)GMP, from which 7-methyl-GMP is transferred to the mRNA to create the cap structure. Y-domain: Indispensable for virus replication. Functionally, putative protease: The putative protease domain although necessary for replication of the virus may not be a protease but rather a structural Zn(2+)-binding domain. Inhibits induction of IFN-beta by MDA5 and RIG-I pathways and down-regulates the expression of MDA5. In terms of biological role, NTPase/helicase: Multi-functional protein that exhibits NTPase and RNA unwinding activities. Hydrolyzes all NTPs efficiently and unwinds RNA duplexes containing 5' overhangs. Possesses a sequence independent RNA-5'-triphosphatase (RTPase) activity suggestive of its role in forming viral cap structure. Also participates in viral genome replication, RNA translocation and genome packaging/unpackaging. Its function is as follows. RNA-directed RNA polymerase: Plays an essential role in the virus replication. Binds to the 3'-end of the genomic RNA to initiate viral replication. This is Non-structural polyprotein pORF1 from Hepatitis E virus genotype 1 (isolate Human/Myanmar/HEVNE8L) (HEV-1).